Consider the following 27-residue polypeptide: Delta-actitoxin-Avd2a (27 aa).

Intrachain disulfides connect cysteine 3-cysteine 17, cysteine 4-cysteine 11, and cysteine 6-cysteine 22.

The protein belongs to the sea anemone short toxin (type III) family.

The protein localises to the secreted. It localises to the nematocyst. Its function is as follows. Specific arthropod (crab and insect) toxin that inhibits inactivation of voltage-gated sodium channels. It competes well with the site-3 toxin LqhalphaIT (from the scorpion L.quinquestriatus (AC P17728)) on binding to cockroach neuronal membranes (Ki=21.4 nM), and inhibits the inactivation of D.melanogaster channel (DmNav1), but not that of mammalian Navs expressed in Xenopus oocytes. Its activity is synergically enhanced by ligands of receptor site-4 (Bj-xtrIT (AC P56637)). Its ability to inhibit the channel mutant DmNav1[D1701R] only decreases 5-fold, whereas the inhibition activity is completely lost by LqhalphaIT and Av2 when tested on DmNav1[D1701R]. The chain is Delta-actitoxin-Avd2a from Anemonia sulcata (Mediterranean snakelocks sea anemone).